The primary structure comprises 197 residues: Transcription factor FapR (197 aa).

This sequence belongs to the FapR family.

Transcriptional factor involved in regulation of membrane lipid biosynthesis by repressing genes involved in fatty acid and phospholipid metabolism. This Bacillus cytotoxicus (strain DSM 22905 / CIP 110041 / 391-98 / NVH 391-98) protein is Transcription factor FapR.